A 523-amino-acid chain; its full sequence is UvrABC system protein C (523 aa).

The 79-residue stretch at 15–93 folds into the GIY-YIG domain; that stretch reads HLPGCYLFKD…IKKHWPRYNI (79 aa). The UVR domain maps to 197-232; it reads RELIESMETEMKEMAAKQMFEQAMELRDEIAALEYL.

The protein belongs to the UvrC family. Interacts with UvrB in an incision complex.

It is found in the cytoplasm. Functionally, the UvrABC repair system catalyzes the recognition and processing of DNA lesions. UvrC both incises the 5' and 3' sides of the lesion. The N-terminal half is responsible for the 3' incision and the C-terminal half is responsible for the 5' incision. The chain is UvrABC system protein C from Methanosarcina mazei (strain ATCC BAA-159 / DSM 3647 / Goe1 / Go1 / JCM 11833 / OCM 88) (Methanosarcina frisia).